The primary structure comprises 161 residues: 6,7-dimethyl-8-ribityllumazine synthase (161 aa).

Residues Trp31, 63–65, and 85–87 contribute to the 5-amino-6-(D-ribitylamino)uracil site; these read SFE and VVI. Position 90 to 91 (90 to 91) interacts with (2S)-2-hydroxy-3-oxobutyl phosphate; that stretch reads GT. His93 (proton donor) is an active-site residue. Residue Phe118 coordinates 5-amino-6-(D-ribitylamino)uracil. Arg132 lines the (2S)-2-hydroxy-3-oxobutyl phosphate pocket.

The protein belongs to the DMRL synthase family.

It catalyses the reaction (2S)-2-hydroxy-3-oxobutyl phosphate + 5-amino-6-(D-ribitylamino)uracil = 6,7-dimethyl-8-(1-D-ribityl)lumazine + phosphate + 2 H2O + H(+). It functions in the pathway cofactor biosynthesis; riboflavin biosynthesis; riboflavin from 2-hydroxy-3-oxobutyl phosphate and 5-amino-6-(D-ribitylamino)uracil: step 1/2. Its function is as follows. Catalyzes the formation of 6,7-dimethyl-8-ribityllumazine by condensation of 5-amino-6-(D-ribitylamino)uracil with 3,4-dihydroxy-2-butanone 4-phosphate. This is the penultimate step in the biosynthesis of riboflavin. The chain is 6,7-dimethyl-8-ribityllumazine synthase from Arthrobacter sp. (strain FB24).